Reading from the N-terminus, the 130-residue chain is Protein ApaG (130 aa).

The region spanning 3–127 is the ApaG domain; it reads RAITRNIQVT…FSLDVPDVRR (125 aa).

This chain is Protein ApaG, found in Xanthobacter autotrophicus (strain ATCC BAA-1158 / Py2).